Here is a 264-residue protein sequence, read N- to C-terminus: Tritrans,polycis-undecaprenyl-diphosphate synthase (geranylgeranyl-diphosphate specific) (264 aa).

Asp-43 is an active-site residue. Asp-43 is a binding site for Mg(2+). Substrate contacts are provided by residues 44 to 47 (GNRR), Trp-48, His-60, and 88 to 90 (STE). The active-site Proton acceptor is the Asn-91. Residues Phe-92, Arg-94, Arg-213, and 219-221 (RIS) contribute to the substrate site. Glu-232 lines the Mg(2+) pocket.

Belongs to the UPP synthase family. Homodimer. The cofactor is Mg(2+).

It carries out the reaction geranylgeranyl diphosphate + 7 isopentenyl diphosphate = tri-trans,hepta-cis-undecaprenyl diphosphate + 7 diphosphate. Functionally, catalyzes the sequential condensation of isopentenyl diphosphate (IPP) with geranylgeranyl diphosphate (GGPP) to yield (2Z,6Z,10Z,14Z,18Z,22Z,26Z,30E,34E,38E)-undecaprenyl diphosphate (tritrans,heptacis-UPP). It is probably the precursor of glycosyl carrier lipids. The polypeptide is Tritrans,polycis-undecaprenyl-diphosphate synthase (geranylgeranyl-diphosphate specific) (Thermococcus kodakarensis (strain ATCC BAA-918 / JCM 12380 / KOD1) (Pyrococcus kodakaraensis (strain KOD1))).